Consider the following 235-residue polypeptide: Small ribosomal subunit protein uS3 (235 aa).

A KH type-2 domain is found at 39-107 (VRQFLNKELA…PAQINIAEVK (69 aa)). The span at 215-226 (AQQPEQQPATPK) shows a compositional bias: low complexity. Positions 215–235 (AQQPEQQPATPKKAPRGKGRK) are disordered.

Belongs to the universal ribosomal protein uS3 family. In terms of assembly, part of the 30S ribosomal subunit. Forms a tight complex with proteins S10 and S14.

Functionally, binds the lower part of the 30S subunit head. Binds mRNA in the 70S ribosome, positioning it for translation. In Histophilus somni (strain 129Pt) (Haemophilus somnus), this protein is Small ribosomal subunit protein uS3.